The sequence spans 209 residues: Orotate phosphoribosyltransferase (209 aa).

5-phospho-alpha-D-ribose 1-diphosphate is bound by residues Arg-96, Lys-100, His-102, and 122 to 130 (EDLISTGGS). Ser-126 contacts orotate.

Belongs to the purine/pyrimidine phosphoribosyltransferase family. PyrE subfamily. Homodimer. Mg(2+) serves as cofactor.

It catalyses the reaction orotidine 5'-phosphate + diphosphate = orotate + 5-phospho-alpha-D-ribose 1-diphosphate. It participates in pyrimidine metabolism; UMP biosynthesis via de novo pathway; UMP from orotate: step 1/2. In terms of biological role, catalyzes the transfer of a ribosyl phosphate group from 5-phosphoribose 1-diphosphate to orotate, leading to the formation of orotidine monophosphate (OMP). This is Orotate phosphoribosyltransferase from Listeria monocytogenes serovar 1/2a (strain ATCC BAA-679 / EGD-e).